A 157-amino-acid chain; its full sequence is Cell cycle regulator of non-homologous end joining (157 aa).

Met-1 is subject to N-acetylmethionine. Residues 1-21 (METLQSETKTRVLPSWLTAQV) carry the KBM motif. Positions 77-147 (KACEQPALAG…SPEEEEEEDV (71 aa)) are disordered. Low complexity predominate over residues 98-107 (VSPHTSSGSS). A compositionally biased stretch (polar residues) spans 123–136 (SPSQRPGGSSSACS). Positions 147–157 (VLKYVREIFFS) match the XLM motif.

Interacts (via KBM motif) with XRCC5/Ku80 and XRCC6/Ku70 heterodimer. Interacts (via XLF motif) with TRIM28/KAP1, ATM, MRE11, NBN and RAD50. Interacts with splicing factor SF3B1. Interacts with ERCC6L2; this interaction is DNA independent. As to quaternary structure, does not interact with XRCC5/Ku80 and XRCC6/Ku70 heterodimer. In terms of assembly, interacts (via KBM motif) with XRCC5/Ku80 and XRCC6/Ku70 heterodimer.

Its subcellular location is the cytoplasm. The protein resides in the nucleus. It is found in the chromosome. Its function is as follows. Cell-cycle-specific regulator of classical non-homologous end joining (NHEJ) of DNA double-strand break (DSB) repair, which can act both as an activator or inhibitor of NHEJ, depending on the cell cycle phase. Acts as a regulator of DNA repair pathway choice by specifically inhibiting classical NHEJ during the S and G2 phases, thereby promoting error-free repair by homologous recombination during cell cycle phases when sister chromatids are present. Preferentially protects single-stranded overhangs at break sites by inhibiting classical NHEJ, thereby creating a local environment that favors homologous recombination. Acts via interaction with XRCC5/Ku80 and XRCC6/Ku70. In contrast, acts as an activator of NHEJ during G1 phase of the cell cycle: promotes classical NHEJ in G1 phase cells via multivalent interactions that increase the affinity of DNA damage response proteins for DSB-associated chromatin. Also involved in immunoglobulin V(D)J recombination. May also act as an indirect regulator of proteasome. This is Cell cycle regulator of non-homologous end joining from Homo sapiens (Human).